Consider the following 416-residue polypeptide: LL-diaminopimelate aminotransferase (416 aa).

2 residues coordinate substrate: Tyr-15 and Gly-42. Pyridoxal 5'-phosphate contacts are provided by residues Tyr-72, 108 to 109 (SK), Tyr-132, Asn-187, Tyr-218, and 246 to 248 (SFS). Lys-109, Tyr-132, and Asn-187 together coordinate substrate. At Lys-249 the chain carries N6-(pyridoxal phosphate)lysine. Arg-257 and Asn-292 together coordinate pyridoxal 5'-phosphate. Asn-292 and Arg-388 together coordinate substrate.

Belongs to the class-I pyridoxal-phosphate-dependent aminotransferase family. LL-diaminopimelate aminotransferase subfamily. As to quaternary structure, homodimer. It depends on pyridoxal 5'-phosphate as a cofactor.

The catalysed reaction is (2S,6S)-2,6-diaminopimelate + 2-oxoglutarate = (S)-2,3,4,5-tetrahydrodipicolinate + L-glutamate + H2O + H(+). Its pathway is amino-acid biosynthesis; L-lysine biosynthesis via DAP pathway; LL-2,6-diaminopimelate from (S)-tetrahydrodipicolinate (aminotransferase route): step 1/1. Functionally, involved in the synthesis of meso-diaminopimelate (m-DAP or DL-DAP), required for both lysine and peptidoglycan biosynthesis. Catalyzes the direct conversion of tetrahydrodipicolinate to LL-diaminopimelate. This chain is LL-diaminopimelate aminotransferase, found in Synechococcus sp. (strain JA-2-3B'a(2-13)) (Cyanobacteria bacterium Yellowstone B-Prime).